The sequence spans 778 residues: IQ domain-containing protein E (778 aa).

2 disordered regions span residues methionine 1 to arginine 71 and serine 83 to serine 108. Residues lysine 37–serine 49 are compositionally biased toward low complexity. Over residues serine 83–histidine 101 the composition is skewed to polar residues. The stretch at leucine 157–proline 323 forms a coiled coil. Phosphoserine is present on serine 322. 4 disordered regions span residues lysine 348–proline 392, glutamate 443–glutamate 462, glutamate 474–arginine 529, and leucine 573–asparagine 612. Residues serine 352–glutamate 362 are compositionally biased toward low complexity. The stretch at glutamate 398–alanine 486 forms a coiled coil. IQ domains are found at residues leucine 553 to arginine 582 and glutamine 615 to alanine 644. The span at serine 581–proline 598 shows a compositional bias: low complexity. Residues threonine 651 to proline 662 show a composition bias toward polar residues. Positions threonine 651–phenylalanine 778 are disordered. Phosphoserine is present on serine 661. Positions isoleucine 672–serine 686 are enriched in basic and acidic residues. Residues proline 739 to valine 752 show a composition bias toward pro residues.

As to quaternary structure, component of the EvC complex composed of EFCAB7, IQCE, EVC2 and EVC; built from two subcomplexes, EVC2:EVC and EFCAB7:IQCE. Interacts (via N-terminus) with EFCAB7 (via EF-hands 1 and 2); this interaction anchors the EVC-EVC2 complex in a signaling microdomain at the base of cilia and stimulates the Hedgehog (Hh) pathway. Interacts with EVC2 (via N-terminal end). Interacts with EVC.

The protein localises to the cell projection. It localises to the cilium membrane. In terms of biological role, component of the EvC complex that positively regulates ciliary Hedgehog (Hh) signaling. Required for proper limb morphogenesis. This chain is IQ domain-containing protein E (Iqce), found in Mus musculus (Mouse).